Reading from the N-terminus, the 235-residue chain is Orotidine 5'-phosphate decarboxylase (235 aa).

Residues Asp-17, Lys-39, 66–75, Thr-121, Arg-182, Gln-191, and Arg-212 each bind substrate; that span reads DMKLLDIDHT. Residue Lys-68 is the Proton donor of the active site.

Belongs to the OMP decarboxylase family. Type 1 subfamily. Homodimer.

It carries out the reaction orotidine 5'-phosphate + H(+) = UMP + CO2. Its pathway is pyrimidine metabolism; UMP biosynthesis via de novo pathway; UMP from orotate: step 2/2. Its function is as follows. Catalyzes the decarboxylation of orotidine 5'-monophosphate (OMP) to uridine 5'-monophosphate (UMP). This Bartonella bacilliformis protein is Orotidine 5'-phosphate decarboxylase.